The primary structure comprises 177 residues: Large ribosomal subunit protein uL10 (177 aa).

It belongs to the universal ribosomal protein uL10 family. In terms of assembly, part of the ribosomal stalk of the 50S ribosomal subunit. The N-terminus interacts with L11 and the large rRNA to form the base of the stalk. The C-terminus forms an elongated spine to which L12 dimers bind in a sequential fashion forming a multimeric L10(L12)X complex.

Forms part of the ribosomal stalk, playing a central role in the interaction of the ribosome with GTP-bound translation factors. The chain is Large ribosomal subunit protein uL10 from Thermoanaerobacter pseudethanolicus (strain ATCC 33223 / 39E) (Clostridium thermohydrosulfuricum).